We begin with the raw amino-acid sequence, 86 residues long: Acyl carrier protein (86 aa).

The 81-residue stretch at 2–82 (ATVFERVKKV…AVVDYLKSKG (81 aa)) folds into the Carrier domain. Position 37 is an O-(pantetheine 4'-phosphoryl)serine (S37).

This sequence belongs to the acyl carrier protein (ACP) family. 4'-phosphopantetheine is transferred from CoA to a specific serine of apo-ACP by AcpS. This modification is essential for activity because fatty acids are bound in thioester linkage to the sulfhydryl of the prosthetic group.

The protein resides in the cytoplasm. Its pathway is lipid metabolism; fatty acid biosynthesis. Its function is as follows. Carrier of the growing fatty acid chain in fatty acid biosynthesis. This Dehalococcoides mccartyi (strain ATCC BAA-2266 / KCTC 15142 / 195) (Dehalococcoides ethenogenes (strain 195)) protein is Acyl carrier protein.